Here is a 350-residue protein sequence, read N- to C-terminus: Melatonin receptor type 1A-A (350 aa).

Over 1–29 the chain is Extracellular; it reads MFMNGSSLNSSALDPSEQALQRPPWVTTT. Residues N4 and N9 are each glycosylated (N-linked (GlcNAc...) asparagine). The chain crosses the membrane as a helical span at residues 30 to 50; it reads LGCFLIFTIVVDILGNLLVIF. The Cytoplasmic segment spans residues 51-63; it reads SVYRNKKLQNAGN. Residues 64–84 form a helical membrane-spanning segment; that stretch reads IFVVSLAVADLVVAIYPYPLV. The Extracellular portion of the chain corresponds to 85-101; that stretch reads LTSIFHRGWNLGYMHCQ. C100 and C177 are disulfide-bonded. Residues 102–122 traverse the membrane as a helical segment; sequence ISGFLMGVSVIGSIFNITGIA. Topologically, residues 123 to 144 are cytoplasmic; the sequence is INCYCYICHSLKYDKLYSDKNS. Residues 145–165 traverse the membrane as a helical segment; sequence VCYVLLIWALTVLAIVPNLFV. At 166–187 the chain is on the extracellular side; the sequence is GSLQYDPRVYSCTFEQSASSAY. A helical membrane pass occupies residues 188-208; sequence TIAVVFFHFILPIMIVTYCYL. The Cytoplasmic segment spans residues 209-240; that stretch reads RIWVLVIQVRRRVKNDNRPKITPHDVRNFVTM. The chain crosses the membrane as a helical span at residues 241-261; that stretch reads FVVFVLFAVCWAPLNFIGLAV. Topologically, residues 262-267 are extracellular; sequence AISPER. The helical transmembrane segment at 268 to 288 threads the bilayer; sequence VVPLIPEWLFVASYFMAYFNS. Over 289–350 the chain is Cytoplasmic; the sequence is CLNAIVYGVL…NNNQVKVDSV (62 aa).

This sequence belongs to the G-protein coupled receptor 1 family.

It localises to the cell membrane. Functionally, high affinity receptor for melatonin. The activity of this receptor is mediated by pertussis toxin sensitive G proteins that inhibits adenylate cyclase activity. This Danio rerio (Zebrafish) protein is Melatonin receptor type 1A-A (mtnr1aa).